The primary structure comprises 141 residues: Acetyltransferase YPN_1354 (141 aa).

The N-acetyltransferase domain occupies 1–141 (MEIRIFQQDD…GKRLIVDQEY (141 aa)).

Belongs to the acetyltransferase family. YpeA subfamily.

The protein is Acetyltransferase YPN_1354 of Yersinia pestis bv. Antiqua (strain Nepal516).